Here is a 525-residue protein sequence, read N- to C-terminus: Ribosomal protein uS12 methylthiotransferase RimO (525 aa).

The span at 1–20 (MPKISTESVNTTIAPSQPAS) shows a compositional bias: polar residues. The segment at 1–44 (MPKISTESVNTTIAPSQPASTAPKDTATLFNPAKPTATPAQSSI) is disordered. In terms of domain architecture, MTTase N-terminal spans 82 to 192 (PKIGFVSLGC…VIRAVALHVP (111 aa)). The [4Fe-4S] cluster site is built by C91, C127, C156, C230, C234, and C237. The region spanning 216–453 (LTPSHYAYLK…MTLQQDISAQ (238 aa)) is the Radical SAM core domain. The TRAM domain maps to 456–525 (QEKIGKTLMV…EYDLFASYQA (70 aa)).

Belongs to the methylthiotransferase family. RimO subfamily. [4Fe-4S] cluster is required as a cofactor.

The protein resides in the cytoplasm. It catalyses the reaction L-aspartate(89)-[ribosomal protein uS12]-hydrogen + (sulfur carrier)-SH + AH2 + 2 S-adenosyl-L-methionine = 3-methylsulfanyl-L-aspartate(89)-[ribosomal protein uS12]-hydrogen + (sulfur carrier)-H + 5'-deoxyadenosine + L-methionine + A + S-adenosyl-L-homocysteine + 2 H(+). Its function is as follows. Catalyzes the methylthiolation of an aspartic acid residue of ribosomal protein uS12. This chain is Ribosomal protein uS12 methylthiotransferase RimO, found in Psychrobacter arcticus (strain DSM 17307 / VKM B-2377 / 273-4).